The primary structure comprises 354 residues: DNA integrity scanning protein DisA (354 aa).

Residues 6 to 144 enclose the DAC domain; sequence GMKIKDTLKI…GDIKYVLRDS (139 aa). ATP-binding positions include glycine 73, leucine 91, and 104–108; that span reads TRHRT.

Belongs to the DisA family. Homooctamer. The cofactor is Mg(2+).

It catalyses the reaction 2 ATP = 3',3'-c-di-AMP + 2 diphosphate. Participates in a DNA-damage check-point that is active prior to asymmetric division when DNA is damaged. DisA forms globular foci that rapidly scan along the chromosomes during sporulation, searching for lesions. When a lesion is present, DisA pauses at the lesion site. This triggers a cellular response that culminates in a temporary block in sporulation initiation. Functionally, also has diadenylate cyclase activity, catalyzing the condensation of 2 ATP molecules into cyclic di-AMP (c-di-AMP). c-di-AMP acts as a signaling molecule that couples DNA integrity with progression of sporulation. The rise in c-di-AMP level generated by DisA while scanning the chromosome, operates as a positive signal that advances sporulation; upon encountering a lesion, the DisA focus arrests at the damaged site and halts c-di-AMP synthesis. In Clostridium botulinum (strain Eklund 17B / Type B), this protein is DNA integrity scanning protein DisA.